Here is a 68-residue protein sequence, read N- to C-terminus: MAKIGENVPLLIDKAVDFMASSQAFREYLNKTPPRDYVPSEVPSESTPIYLQRLEYYRRLYRPKEERG.

This is an uncharacterized protein from Salmonella typhi.